Consider the following 256-residue polypeptide: Tyrosine-protein kinase-interacting protein (256 aa).

Positions 1-14 are enriched in acidic residues; that stretch reads MANEGEEIELTEFP. The disordered stretch occupies residues 1 to 49; that stretch reads MANEGEEIELTEFPETEKERKDEEKLSSCSEETTNTSSSSGSDHVPVPI. Residues 1–228 lie on the Cytoplasmic side of the membrane; that stretch reads MANEGEEIEL…DLKRLENKIN (228 aa). Positions 15–26 are enriched in basic and acidic residues; the sequence is ETEKERKDEEKL. Low complexity predominate over residues 27-42; that stretch reads SSCSEETTNTSSSSGS. A Phosphotyrosine; by host LCK modification is found at Y114. Y127 carries the phosphotyrosine; by host modification. Residues 146-155 are CSKH/LBD2; sequence EDLQSFLEKY. The segment at 162–183 is disordered; that stretch reads PKRDLSATWDPGMPTPPLPPRP. An SH3B/LBD1 region spans residues 174-183; sequence MPTPPLPPRP. Over residues 174 to 183 the composition is skewed to pro residues; that stretch reads MPTPPLPPRP. The helical transmembrane segment at 229–249 threads the bilayer; sequence VIICLVVVILAVLLLVTVLSI. Residues 250–256 lie on the Extracellular side of the membrane; the sequence is LHIGMKS.

In terms of assembly, binds host LCK, human WDR48 and human NXF1/TAP. Forms a complex with activated LCK and STAT1 and STAT3. Phosphorylation on Tyr-114 acts as a docking site for the recruitment of STATs 1 and 3.

Its subcellular location is the host cell membrane. In terms of biological role, plays a critical role in virus induced T-cell transformation. Binds to T-cell-specific tyrosine kinase LCK SH2 and SH3 domains, thereby activating its kinase activity. Once phosphorylated by host LCK, forms a complex with at least STAT 1 and 3, resulting on the phosphorylation of STAT3 and presumably STAT1, and their migration into the nucleus to induce transcription of target genes. Stimulates host ILF3/NF-AT-90 activity. Association with host NXF1/TAP transduces the signal up-regulating surface expression of adhesion molecules as well as activating NF-kappa-B activity. Acts synergistically with StpC to stimulate NF-kappa-B activity and interleukin-2 gene expression. Activation of NF-kappa-B protects lymphocytes from apoptosis, thereby facilitating viral induced cell transformation. May cause down-regulation of host LCK and cell apoptosis when stably overexpressed ex vivo. Interaction with WDR48 induce degradation of T-cell receptor in a lysosome-dependent fashion, when both proteins are overexpressed. The biological effect of this interaction remains controversial since no T-cell receptor degradation is observed in infected cells. The protein is Tyrosine-protein kinase-interacting protein of Saimiri sciureus (Common squirrel monkey).